The chain runs to 452 residues: Probable multidrug resistance protein NorM (452 aa).

The next 12 membrane-spanning stretches (helical) occupy residues 14-34 (LLHI…ITFL), 56-76 (LWTP…PIVA), 97-117 (VAAL…DLIL), 129-149 (IAKH…VYTV), 164-184 (MMIT…FIFG), 195-215 (GAGL…FFII), 244-264 (IGLP…AVTL), 284-304 (ASLL…VVGF), 319-339 (LIGI…ILLF), 360-380 (FLIY…IQGA), 392-412 (AAAF…VGTF), and 417-437 (AFGY…GLFF).

It belongs to the multi antimicrobial extrusion (MATE) (TC 2.A.66.1) family.

It is found in the cell membrane. In terms of biological role, multidrug efflux pump. The sequence is that of Probable multidrug resistance protein NorM (norM) from Bacillus subtilis (strain 168).